The sequence spans 95 residues: Large ribosomal subunit protein eL42 (95 aa).

Zn(2+) contacts are provided by C11, C14, C71, and C74. The C4-type zinc finger occupies 11–74 (CPRCNTHTEH…QVLVITCTVC (64 aa)).

It belongs to the eukaryotic ribosomal protein eL42 family. Part of the 50S ribosomal subunit. The cofactor is Zn(2+).

Functionally, binds to the 23S rRNA. The sequence is that of Large ribosomal subunit protein eL42 from Aeropyrum pernix (strain ATCC 700893 / DSM 11879 / JCM 9820 / NBRC 100138 / K1).